A 464-amino-acid polypeptide reads, in one-letter code: Soluble pyridine nucleotide transhydrogenase (464 aa).

An FAD-binding site is contributed by 35–44 (DDRRQVGGNC).

The protein belongs to the class-I pyridine nucleotide-disulfide oxidoreductase family. It depends on FAD as a cofactor.

It is found in the cytoplasm. It carries out the reaction NAD(+) + NADPH = NADH + NADP(+). Functionally, conversion of NADPH, generated by peripheral catabolic pathways, to NADH, which can enter the respiratory chain for energy generation. This Pseudomonas putida (strain GB-1) protein is Soluble pyridine nucleotide transhydrogenase.